The following is a 311-amino-acid chain: Vomeronasal type-1 receptor 105 (311 aa).

The Extracellular portion of the chain corresponds to 1-17 (MMNKNSRLYTDSNIRNT). A helical transmembrane segment spans residues 18–38 (FFAEIGIGVSANSLLLLFNIF). Topologically, residues 39 to 50 (KLICGQRSRLTD) are cytoplasmic. Residues 51–71 (LPIGLLSLINLLMLLMTAFIA) form a helical membrane-spanning segment. Residues 72–94 (TDTFISWRGWDDIICKSLLYLYR) are Extracellular-facing. Cysteine 86 and cysteine 173 are oxidised to a cystine. A helical transmembrane segment spans residues 95 to 115 (TFRGLSLCTSCLLSVLQAIIL). Residues 116 to 135 (SPRSSCLAKFKHKPSHHISC) are Cytoplasmic-facing. The chain crosses the membrane as a helical span at residues 136 to 156 (AILSLSVLYMFISSHLLVSII). The Extracellular portion of the chain corresponds to 157–188 (ATPNLTTNDFIHVTQWCSILPMSYLMQSMFST). A glycan (N-linked (GlcNAc...) asparagine) is linked at asparagine 160. Residues 189-209 (LLAIRDVFLISLMVLSTWYMV) traverse the membrane as a helical segment. Over 210–239 (ALLCRHRKQTRHLQGTSLSPKASPEQRATR) the chain is Cytoplasmic. A helical transmembrane segment spans residues 240-260 (SILMLMSLFVLMSVFDSIVCS). The Extracellular portion of the chain corresponds to 261 to 271 (SRTMYLNDPIS). The chain crosses the membrane as a helical span at residues 272–292 (YSYQLFMVHIYATVSPFVFIV). The Cytoplasmic segment spans residues 293 to 311 (TEKHIVNSLRSMCVKVMNV).

It belongs to the G-protein coupled receptor 1 family. As to expression, expressed in 1-4% of neurons of the vomeronasal organ. Only one pheromone receptor gene may be expressed in a particular neuron. Not expressed in the main olfactory epithelium.

The protein resides in the cell membrane. Putative pheromone receptor implicated in the regulation of social as well as reproductive behavior. The protein is Vomeronasal type-1 receptor 105 (Vom1r105) of Rattus norvegicus (Rat).